Reading from the N-terminus, the 224-residue chain is 7-cyano-7-deazaguanine synthase (224 aa).

10-20 (LSGGLDSATVV) is a binding site for ATP. Residues Cys-189, Cys-199, Cys-202, and Cys-205 each coordinate Zn(2+).

This sequence belongs to the QueC family. It depends on Zn(2+) as a cofactor.

It carries out the reaction 7-carboxy-7-deazaguanine + NH4(+) + ATP = 7-cyano-7-deazaguanine + ADP + phosphate + H2O + H(+). It functions in the pathway purine metabolism; 7-cyano-7-deazaguanine biosynthesis. Its function is as follows. Catalyzes the ATP-dependent conversion of 7-carboxy-7-deazaguanine (CDG) to 7-cyano-7-deazaguanine (preQ(0)). This is 7-cyano-7-deazaguanine synthase from Pseudomonas aeruginosa (strain LESB58).